Consider the following 185-residue polypeptide: Endoribonuclease YbeY (185 aa).

Positions 142, 146, and 152 each coordinate Zn(2+).

The protein belongs to the endoribonuclease YbeY family. Zn(2+) serves as cofactor.

The protein localises to the cytoplasm. Single strand-specific metallo-endoribonuclease involved in late-stage 70S ribosome quality control and in maturation of the 3' terminus of the 16S rRNA. The sequence is that of Endoribonuclease YbeY from Parvibaculum lavamentivorans (strain DS-1 / DSM 13023 / NCIMB 13966).